Consider the following 278-residue polypeptide: Myb/SANT-like DNA-binding domain-containing protein 1 (278 aa).

In terms of domain architecture, Myb-like spans 44–131 (RNWTDAEMRG…WPYYLAIDRI (88 aa)). The segment at 139 to 167 (CEGKLPDGQQPGPSTSQTEASLSPSAKST) is disordered. Residues 149 to 166 (PGPSTSQTEASLSPSAKS) show a composition bias toward polar residues.

The polypeptide is Myb/SANT-like DNA-binding domain-containing protein 1 (Msantd1) (Mus musculus (Mouse)).